The following is a 119-amino-acid chain: Large ribosomal subunit protein bL20 (119 aa).

Belongs to the bacterial ribosomal protein bL20 family.

Binds directly to 23S ribosomal RNA and is necessary for the in vitro assembly process of the 50S ribosomal subunit. It is not involved in the protein synthesizing functions of that subunit. The sequence is that of Large ribosomal subunit protein bL20 from Bacillus velezensis (strain DSM 23117 / BGSC 10A6 / LMG 26770 / FZB42) (Bacillus amyloliquefaciens subsp. plantarum).